A 261-amino-acid chain; its full sequence is Phosphonates import ATP-binding protein PhnC (261 aa).

The 245-residue stretch at 9-253 (IQLKDVSKIY…VFDDIYNGGN (245 aa)) folds into the ABC transporter domain. 42–49 (GLSGAGKS) lines the ATP pocket.

Belongs to the ABC transporter superfamily. Phosphonates importer (TC 3.A.1.9.1) family. As to quaternary structure, the complex is composed of two ATP-binding proteins (PhnC), two transmembrane proteins (PhnE) and a solute-binding protein (PhnD).

Its subcellular location is the cell membrane. The catalysed reaction is phosphonate(out) + ATP + H2O = phosphonate(in) + ADP + phosphate + H(+). Its function is as follows. Part of the ABC transporter complex PhnCDE involved in phosphonates import. Responsible for energy coupling to the transport system. The sequence is that of Phosphonates import ATP-binding protein PhnC from Lactobacillus gasseri (strain ATCC 33323 / DSM 20243 / BCRC 14619 / CIP 102991 / JCM 1131 / KCTC 3163 / NCIMB 11718 / NCTC 13722 / AM63).